A 2019-amino-acid chain; its full sequence is Sodium channel protein type 5 subunit alpha (2019 aa).

Residues 1 to 129 lie on the Cytoplasmic side of the membrane; the sequence is MANFLLPRGT…VRRAAVKILV (129 aa). A disordered region spans residues 27–66; the sequence is RMAEKQARGSATSQESREGLPEEEAPRPQLDLQASKKLPD. A Phosphoserine modification is found at serine 36. Threonine 38 is subject to Phosphothreonine. The span at 41–52 shows a compositional bias: basic and acidic residues; sequence ESREGLPEEEAP. One copy of the I repeat lies at 113-420; that stretch reads VLSPFHPVRR…VVAMAYEEQN (308 aa). Residues 130–149 traverse the membrane as a helical segment; the sequence is HSLFSMLIMCTILTNCVFMA. At 150–157 the chain is on the extracellular side; sequence QHDPPPWT. A helical transmembrane segment spans residues 158 to 179; that stretch reads KYVEYTFTAIYTFESLVKILAR. The Cytoplasmic segment spans residues 180–188; the sequence is GFCLHAFTF. A helical membrane pass occupies residues 189–209; that stretch reads LRDPWNWLDFSVIVMAYTTEF. The Extracellular segment spans residues 210 to 216; that stretch reads VDLGNVS. Asparagine 214 carries an N-linked (GlcNAc...) asparagine glycan. A helical transmembrane segment spans residues 217–236; it reads ALRTFRVLRALKTISVISGL. Over 237–249 the chain is Cytoplasmic; sequence KTIVGALIQSVKK. A helical membrane pass occupies residues 250-272; that stretch reads LADVMVLTVFCLSVFALIGLQLF. Residues 273–357 lie on the Extracellular side of the membrane; that stretch reads MGNLRHKCVR…PDHGYTSFDS (85 aa). An intrachain disulfide couples cysteine 280 to cysteine 335. 5 N-linked (GlcNAc...) asparagine glycosylation sites follow: asparagine 283, asparagine 288, asparagine 291, asparagine 318, and asparagine 328. An intramembrane region (pore-forming) is located at residues 358-378; that stretch reads FAWAFLALFRLMTQDCWERLY. At 379–386 the chain is on the extracellular side; sequence QQTLRSAG. The chain crosses the membrane as a helical span at residues 387–413; it reads KIYMIFFMLVIFLGSFYLVNLILAVVA. The Cytoplasmic segment spans residues 414–719; it reads MAYEEQNQAT…VKFVVMDPFA (306 aa). Residues serine 457, serine 460, serine 483, and serine 484 each carry the phosphoserine modification. Disordered regions lie at residues 461-575 and 610-647; these read LEMS…TQGQ and EATS…TPQA. Threonine 486 carries the phosphothreonine modification. The span at 491–503 shows a compositional bias: basic and acidic residues; it reads DDRLPKSDSEDGP. A phosphoserine mark is found at serine 497 and serine 510. Over residues 507 to 528 the composition is skewed to polar residues; that stretch reads NQLSLTHGLSRTSMRPRSSRGS. Arginine 526 carries the dimethylated arginine; alternate modification. An Omega-N-methylarginine; alternate modification is found at arginine 526. Residues serine 539 and serine 571 each carry the phosphoserine modification. 2 positions are modified to phosphoserine: serine 664 and serine 667. The II repeat unit spans residues 699-971; that stretch reads CCPLWMSIKQ…QLALARIQRG (273 aa). A helical membrane pass occupies residues 720 to 737; it reads DLTITMCIVLNTLFMALE. Topologically, residues 738–746 are extracellular; the sequence is HYNMTAEFE. The N-linked (GlcNAc...) asparagine glycan is linked to asparagine 740. The chain crosses the membrane as a helical span at residues 747 to 769; that stretch reads EMLQVGNLVFTGIFTAEMTFKII. Residues 770–775 are Cytoplasmic-facing; it reads ALDPYY. The chain crosses the membrane as a helical span at residues 776-796; the sequence is YFQQGWNIFDSIIVILSLMEL. The Extracellular portion of the chain corresponds to 797 to 806; it reads GLSRMGNLSV. N-linked (GlcNAc...) asparagine glycosylation occurs at asparagine 803. Residues 807–821 traverse the membrane as a helical segment; it reads LRSFRLLRVFKLAKS. Residues 822–838 lie on the Cytoplasmic side of the membrane; that stretch reads WPTLNTLIKIIGNSVGA. Residues 839-860 form a helical membrane-spanning segment; sequence LGNLTLVLAIIVFIFAVVGMQL. Topologically, residues 861–886 are extracellular; that stretch reads FGKNYSELRHRISDSGLLPRWHMMDF. Asparagine 864 is a glycosylation site (N-linked (GlcNAc...) asparagine). The pore-forming intramembrane region spans 887 to 905; sequence FHAFLIIFRILCGEWIETM. Over 906–914 the chain is Extracellular; it reads WDCMEVSGQ. Cysteine 908 and cysteine 917 are disulfide-bonded. A helical transmembrane segment spans residues 915–943; it reads SLCLLVFLLVMVIGNLVVLNLFLALLLSS. Residues 944–1205 lie on the Cytoplasmic side of the membrane; it reads FSADNLTAPD…LRKTCYRIVE (262 aa). The tract at residues 1000–1144 is disordered; the sequence is HSQLPSCIAA…EDSYSEGSTA (145 aa). Basic and acidic residues predominate over residues 1017–1036; it reads EVEKAPPARKETRFEEDKRP. Residues 1056–1075 show a composition bias toward acidic residues; the sequence is SDTDDQEEDEENSLGTEEEE. Positions 1098-1115 are enriched in low complexity; that stretch reads SQVSETTSSEAEASTSQA. Residues 1189–1503 form an III repeat; that stretch reads PGKVWWRLRK…KKYYNAMKKL (315 aa). The chain crosses the membrane as a helical span at residues 1206-1227; that stretch reads HSWFETFIIFMILLSSGALAFE. The Extracellular portion of the chain corresponds to 1228-1238; sequence DIYLEERKTIK. A helical membrane pass occupies residues 1239-1261; it reads VLLEYADKMFTYVFVLEMLLKWV. Residues 1262–1270 lie on the Cytoplasmic side of the membrane; that stretch reads AYGFKKYFT. Residues 1271–1293 traverse the membrane as a helical segment; the sequence is NAWCWLDFLIVDVSLVSLVANTL. Residues 1294-1299 lie on the Extracellular side of the membrane; the sequence is GFAEMG. The chain crosses the membrane as a helical span at residues 1300–1319; it reads PIKSLRTLRALRPLRALSRF. The Cytoplasmic portion of the chain corresponds to 1320 to 1332; sequence EGMRVVVNALVGA. Residues 1333 to 1357 traverse the membrane as a helical segment; that stretch reads IPSIMNVLLVCLIFWLIFSIMGVNL. The Extracellular segment spans residues 1358-1402; the sequence is FAGKFGRCINQTEGDLPLNYTIVNNKSECESFNVTGELYWTKVKV. Asparagine 1367, asparagine 1376, asparagine 1382, and asparagine 1390 each carry an N-linked (GlcNAc...) asparagine glycan. Residues 1403–1424 constitute an intramembrane region (pore-forming); the sequence is NFDNVGAGYLALLQVATFKGWM. The Extracellular segment spans residues 1425-1447; that stretch reads DIMYAAVDSRGYEEQPQWEDNLY. Residues 1448–1472 traverse the membrane as a helical segment; that stretch reads MYIYFVVFIIFGSFFTLNLFIGVII. Residues 1473-1530 are Cytoplasmic-facing; it reads DNFNQQKKKLGGQDIFMTEEQKKYYNAMKKLGSKKPQKPIPRPLNKYQGFIFDIVTKQ. A Phosphoserine; by PKC modification is found at serine 1505. The IV repeat unit spans residues 1512–1809; that stretch reads IPRPLNKYQG…WEKFDPEATQ (298 aa). The chain crosses the membrane as a helical span at residues 1531–1549; that stretch reads AFDVTIMFLICLNMVTMMV. Topologically, residues 1550-1560 are extracellular; sequence ETDDQSPEKVN. A helical membrane pass occupies residues 1561–1582; the sequence is ILAKINLLFVAIFTGECIVKMA. Over 1583–1591 the chain is Cytoplasmic; sequence ALRHYYFTN. Residues 1592–1614 traverse the membrane as a helical segment; that stretch reads SWNIFDFVVVILSIVGTVLSDII. Topologically, residues 1615 to 1621 are extracellular; that stretch reads QKYFFSP. Residues 1622–1642 traverse the membrane as a helical segment; that stretch reads TLFRVIRLARIGRILRLIRGA. The Cytoplasmic portion of the chain corresponds to 1643 to 1652; sequence KGIRTLLFAL. Residues 1653–1681 traverse the membrane as a helical segment; sequence MMSLPALFNIGLLLFLVMFIYSIFGMANF. Residues 1682–1699 lie on the Extracellular side of the membrane; the sequence is AYVKWEAGIDDMFNFQTF. The segment at residues 1700–1716 is an intramembrane region (pore-forming); the sequence is ANSMLCLFQITTSAGWD. Topologically, residues 1717 to 1747 are extracellular; the sequence is GLLSPILNTGPPYCDPNLPNSNGSRGNCGSP. Residues 1748–1773 traverse the membrane as a helical segment; sequence AVGILFFTTYIIISFLIVVNMYIAII. At 1774–2019 the chain is on the cytoplasmic side; the sequence is LENFSVATEE…SPDRDRESIV (246 aa). An interaction with FGF13 region spans residues 1841–1903; the sequence is DLPMVSGDRI…ITTTLRRKHE (63 aa). In terms of domain architecture, IQ spans 1903–1932; sequence EEVSATVIQRAFRRHLLQRSVKHASFLFRQ. The segment covering 1963–1982 has biased composition (low complexity); sequence SGPLSSSSISSTSFPPSYDS. The disordered stretch occupies residues 1963-2019; it reads SGPLSSSSISSTSFPPSYDSVTRATSDNLPVRASDYSRSEDLADFPPSPDRDRESIV. The interval 1977–1980 is interaction with NEDD4, NEDD4L and WWP2; it reads PPSY.

The protein belongs to the sodium channel (TC 1.A.1.10) family. Nav1.5/SCN5A subfamily. As to quaternary structure, cannot form the same regulatory interactions with beta subunits as other Navs do. Interacts with the PDZ domain of the syntrophin SNTA1, SNTB1 and SNTB2. Interacts with NEDD4, NEDD4L, WWP2 and GPD1L. Interacts with CALM. Interacts with FGF13; the interaction is direct and may regulate SNC5A density at membranes and function. Interacts with FGF12 and FGF14. Interacts with ANK3. Interacts with PKP2 (via N-terminus). Interacts with TMEM233. Interacts with XIRP2; the interaction is required for normal action potential configuration in the heart. Phosphorylation at Ser-1505 by PKC in a highly conserved cytoplasmic loop slows inactivation of the sodium channel and reduces peak sodium currents. Regulated through phosphorylation by CaMK2D. In terms of processing, ubiquitinated by NEDD4L; which promotes its endocytosis. Does not seem to be ubiquitinated by NEDD4 or WWP2. Post-translationally, lacks the cysteine which covalently binds the conotoxin GVIIJ. This cysteine (position 868) is speculated in other sodium channel subunits alpha to be implied in covalent binding with the sodium channel subunit beta-2 or beta-4. N-glycosylated at Asn-318, probably hinders potential interaction with regulatory subunits. As to expression, expressed in the myocardium (at protein level).

It localises to the cell membrane. The protein resides in the cytoplasm. Its subcellular location is the perinuclear region. The protein localises to the sarcolemma. It is found in the T-tubule. It localises to the cell junction. It carries out the reaction Na(+)(in) = Na(+)(out). With respect to regulation, channel inactivation is regulated by intracellular calcium levels. It is a tetrodotoxin-resistant voltage-gated Na(+) channel (Nav). In terms of biological role, pore-forming subunit of Nav1.5, a voltage-gated sodium (Nav) channel that directly mediates the depolarizing phase of action potentials in excitable membranes. Navs, also called VGSCs (voltage-gated sodium channels) or VDSCs (voltage-dependent sodium channels), operate by switching between closed and open conformations depending on the voltage difference across the membrane. In the open conformation they allow Na(+) ions to selectively pass through the pore, along their electrochemical gradient. The influx of Na(+) ions provokes membrane depolarization, initiating the propagation of electrical signals throughout cells and tissues. Nav1.5 is the predominant sodium channel expressed in myocardial cells and it is responsible for the initial upstroke of the action potential in cardiac myocytes, thereby initiating the heartbeat. Required for normal electrical conduction including formation of the infranodal ventricular conduction system and normal action potential configuration, as a result of its interaction with XIRP2. This is Sodium channel protein type 5 subunit alpha from Mus musculus (Mouse).